The chain runs to 537 residues: CTP synthase (537 aa).

An amidoligase domain region spans residues Met1 to Ile265. A CTP-binding site is contributed by Ser13. Ser13 lines the UTP pocket. ATP-binding positions include Ser14–Leu19 and Asp71. Mg(2+) contacts are provided by Asp71 and Glu139. CTP contacts are provided by residues Asp146–Glu148 and Lys222. Lys222 serves as a coordination point for UTP. One can recognise a Glutamine amidotransferase type-1 domain in the interval Arg290–Cys536. L-glutamine is bound at residue Gly352. Cys379 serves as the catalytic Nucleophile; for glutamine hydrolysis. L-glutamine contacts are provided by residues Phe380–Gln383, Glu403, and Arg464. Catalysis depends on residues His509 and Glu511.

This sequence belongs to the CTP synthase family. Homotetramer.

It carries out the reaction UTP + L-glutamine + ATP + H2O = CTP + L-glutamate + ADP + phosphate + 2 H(+). The catalysed reaction is L-glutamine + H2O = L-glutamate + NH4(+). It catalyses the reaction UTP + NH4(+) + ATP = CTP + ADP + phosphate + 2 H(+). The protein operates within pyrimidine metabolism; CTP biosynthesis via de novo pathway; CTP from UDP: step 2/2. Allosterically activated by GTP, when glutamine is the substrate; GTP has no effect on the reaction when ammonia is the substrate. The allosteric effector GTP functions by stabilizing the protein conformation that binds the tetrahedral intermediate(s) formed during glutamine hydrolysis. Inhibited by the product CTP, via allosteric rather than competitive inhibition. Its function is as follows. Catalyzes the ATP-dependent amination of UTP to CTP with either L-glutamine or ammonia as the source of nitrogen. Regulates intracellular CTP levels through interactions with the four ribonucleotide triphosphates. The chain is CTP synthase from Rickettsia rickettsii (strain Iowa).